Here is a 730-residue protein sequence, read N- to C-terminus: Protein groucho (730 aa).

The interval Gln144–Asn411 is disordered. Residues Ala198 to Lys233 show a composition bias toward basic and acidic residues. Phosphoserine occurs at positions 205, 207, and 218. The tract at residues Val206–Ser267 is CCN domain. A Nuclear localization signal motif is present at residues Lys227–Lys230. Ser242 is subject to Phosphoserine; by CK2. The span at Met254–Lys283 shows a compositional bias: basic and acidic residues. Ser258 is modified (phosphoserine; by CDC2). Residues Asn262–Ala425 form a binding to basic helix-loop-helix domain region. The residue at position 267 (Ser267) is a Phosphoserine. Low complexity-rich tracts occupy residues Ser296–Ser308, Ala322–Pro345, and Tyr353–Ala362. A phosphothreonine mark is found at Thr326 and Thr328. A compositionally biased stretch (pro residues) spans Gln366–Tyr382. WD repeat units follow at residues Ser442–Pro480, Gln488–Lys527, Ser532–Gln571, Gly574–Gln613, Asp615–Leu654, Leu656–Gln695, and Lys697–Tyr730.

Belongs to the WD repeat Groucho/TLE family. As to quaternary structure, forms a complex with the hairy/Enhancer of split/deadpan family of basic helix-loop-helix proteins in order to repress transcription. Its activity in regulating transcription depends on other proteins as it lacks a DNA-binding motif. Interacts with hairy/hry (via WRPW motif). Ubiquitinated by XIAP/BIRC4. Ubiquitinated by hyd in response to Wnt signaling, leading to degradation by the proteasome.

The protein resides in the nucleus. In terms of biological role, transcriptional corepressor that regulates transcription when recruited to specific target DNA by hairy-related bHLH proteins. Maternally required for neurogenesis; in the segregation of the neuroectoderm. Directly or indirectly interacts with Notch and Delta. This chain is Protein groucho (gro), found in Drosophila melanogaster (Fruit fly).